The following is a 354-amino-acid chain: Trans-L-3-hydroxyproline dehydratase (354 aa).

The active-site Proton acceptor is C104. Substrate is bound by residues G105–H106, D269, and G274–S275.

This sequence belongs to the proline racemase family. As to quaternary structure, homodimer.

It catalyses the reaction trans-3-hydroxy-L-proline = 1-pyrroline-2-carboxylate + H2O. Catalyzes the dehydration of trans-3-hydroxy-L-proline to delta-1-pyrroline-2-carboxylate (Pyr2C). This is Trans-L-3-hydroxyproline dehydratase (L3hypdh) from Mus musculus (Mouse).